The primary structure comprises 403 residues: Cell cycle checkpoint control protein RAD9B (403 aa).

A disordered region spans residues 285–347; it reads PLSQARRSHP…ASAGQDDIFE (63 aa). Phosphoserine occurs at positions 354 and 363.

Belongs to the rad9 family. As to quaternary structure, interacts with HUS1, HUS1B, RAD1, RAD9A and RAD17.

The polypeptide is Cell cycle checkpoint control protein RAD9B (Rad9b) (Mus musculus (Mouse)).